Here is a 238-residue protein sequence, read N- to C-terminus: ATP synthase subunit a (238 aa).

5 consecutive transmembrane segments (helical) span residues 15-35 (IFNLTMLAMTLLIVGVIFVFI), 76-96 (YSLFFLCLFLFMVIANNLGLM), 111-131 (PTANLQYDLTLSFLVILLTHI), 167-187 (LALRIFGNIFAGEVMTSLLLL), and 208-230 (AFSVFISCIQAYVFTLLTSVYLG).

This sequence belongs to the ATPase A chain family. In terms of assembly, F-type ATPases have 2 components, CF(1) - the catalytic core - and CF(0) - the membrane proton channel. CF(1) has five subunits: alpha(3), beta(3), gamma(1), delta(1), epsilon(1). CF(0) has three main subunits: a(1), b(2) and c(9-12). The alpha and beta chains form an alternating ring which encloses part of the gamma chain. CF(1) is attached to CF(0) by a central stalk formed by the gamma and epsilon chains, while a peripheral stalk is formed by the delta and b chains.

The protein resides in the cell membrane. In terms of biological role, key component of the proton channel; it plays a direct role in the translocation of protons across the membrane. In Streptococcus pneumoniae (strain 70585), this protein is ATP synthase subunit a.